We begin with the raw amino-acid sequence, 117 residues long: MACSVHLVLFLTILLSLAETPESAPAHRGRGGWTLNSAGYLLGPVLPVSSKADQGRKRDSALEILDLWKIIDGLPYSHSPRMTKRTMGETFVKANTGDMHILDKNVPKEEATLDSES.

The signal sequence occupies residues 1–23 (MACSVHLVLFLTILLSLAETPES). The propeptide occupies 86–117 (TMGETFVKANTGDMHILDKNVPKEEATLDSES).

It belongs to the galanin family. Isoform 2 is found in brain, thymus and skin. Isoform 2 is found in the skin, in pericytes covering microvascular arterioles and venules on their abluminal surfaces. In larger vessels, isoform 2 is expressed in layers of smooth muscle cells. Isoform 2 is not detected in endothelial cells.

The protein resides in the secreted. Functionally, hypothalamic neuropeptide which binds to the G-protein-coupled galanin receptors (GALR1, GALR2 and GALR3). Involved in a large number of putative physiological functions in CNS homeostatic processes, including the regulation of gonadotropin-releasing hormone secretion. Its function is as follows. Exhibits antimicrobial activity against Gram-negative bacterias, inducing bacterial membrane blebbing. Exhibits potent and dose-dependent vasoconstrictor and anti-edema activity in the cutaneous microvasculature, a physiologic effects which does not appear to be mediated via GALR1 or GALR2. This chain is Galanin-like peptide (Galp), found in Mus musculus (Mouse).